The primary structure comprises 381 residues: DNA dC-&gt;dU-editing enzyme APOBEC-3G (381 aa).

The segment at 1-62 (MKPQTRNTVV…ANIFQGQVSF (62 aa)) is essential for cytoplasmic localization. CMP/dCMP-type deaminase domains follow at residues 29-143 (HRNT…SQTG) and 211-325 (GQHQ…LRRL). Position 32 is a phosphothreonine; by PKA (Thr32). Zn(2+) contacts are provided by His67, Cys98, and Cys101. The interval 206-333 (DPSVLGQHQS…RLDRAGTPIS (128 aa)) is necessary for homooligomerization. An interaction with DNA region spans residues 210-212 (LGQ). His254 is a binding site for Zn(2+). The active-site Proton donor is Glu256. Residues Cys285 and Cys288 each contribute to the Zn(2+) site. The interval 310-317 (RIYDYQRG) is interaction with DNA.

This sequence belongs to the cytidine and deoxycytidylate deaminase family. As to quaternary structure, homodimer. Homooligomer. Can bind RNA to form ribonucleoprotein complexes of high-molecular-mass (HMM) or low-molecular-mass (LMM). HMM is inactive and heterogeneous in protein composition because of binding nonselectively to cellular RNAs, which in turn are associated with variety of cellular proteins. The LMM form which is enzymatically active has few or no RNAs associated. Its ability to form homooligomer is distinct from its ability to assemble into HMM. Interacts with APOBEC3B, APOBEC3F, MOV10, AGO2, EIF4E, EIF4ENIF1, DCP2 and DDX6 in an RNA-dependent manner. Interacts with AGO1, AGO3 and PKA/PRKACA. The cofactor is Zn(2+).

The protein resides in the cytoplasm. It is found in the nucleus. The protein localises to the P-body. It catalyses the reaction a 2'-deoxycytidine in single-stranded DNA + H2O + H(+) = a 2'-deoxyuridine in single-stranded DNA + NH4(+). Its function is as follows. DNA deaminase (cytidine deaminase) which acts as an inhibitor of retrovirus replication and retrotransposon mobility. After the penetration of retroviral nucleocapsids into target cells of infection and the initiation of reverse transcription, it can induce the conversion of cytosine to uracil in the minus-sense single-strand viral DNA, leading to G-to-A hypermutations in the subsequent plus-strand viral DNA. The resultant detrimental levels of mutations in the proviral genome, along with a deamination-independent mechanism that works prior to the proviral integration, together exert efficient antiretroviral effects in infected target cells. Selectively targets single-stranded DNA and does not deaminate double-stranded DNA or single- or double-stranded RNA. In Lagothrix lagotricha (Brown woolly monkey), this protein is DNA dC-&gt;dU-editing enzyme APOBEC-3G (APOBEC3G).